The following is a 507-amino-acid chain: ATP synthase subunit alpha, chloroplastic (507 aa).

169-176 (IGDRQTGK) provides a ligand contact to ATP.

It belongs to the ATPase alpha/beta chains family. As to quaternary structure, F-type ATPases have 2 components, CF(1) - the catalytic core - and CF(0) - the membrane proton channel. CF(1) has five subunits: alpha(3), beta(3), gamma(1), delta(1), epsilon(1). CF(0) has four main subunits: a, b, b' and c.

It localises to the plastid. The protein localises to the chloroplast thylakoid membrane. It catalyses the reaction ATP + H2O + 4 H(+)(in) = ADP + phosphate + 5 H(+)(out). Produces ATP from ADP in the presence of a proton gradient across the membrane. The alpha chain is a regulatory subunit. The chain is ATP synthase subunit alpha, chloroplastic from Saccharum hybrid (Sugarcane).